A 292-amino-acid chain; its full sequence is Cytidine deaminase (292 aa).

CMP/dCMP-type deaminase domains are found at residues 47 to 167 (TPLK…FGPK) and 186 to 292 (DHQD…YYSL). Substrate is bound at residue 88 to 90 (NQE). Histidine 101 contributes to the Zn(2+) binding site. Glutamate 103 (proton donor) is an active-site residue. Residues cysteine 128 and cysteine 131 each coordinate Zn(2+).

It belongs to the cytidine and deoxycytidylate deaminase family. As to quaternary structure, homodimer. The cofactor is Zn(2+).

The catalysed reaction is cytidine + H2O + H(+) = uridine + NH4(+). It catalyses the reaction 2'-deoxycytidine + H2O + H(+) = 2'-deoxyuridine + NH4(+). In terms of biological role, this enzyme scavenges exogenous and endogenous cytidine and 2'-deoxycytidine for UMP synthesis. This is Cytidine deaminase from Haemophilus influenzae (strain 86-028NP).